The primary structure comprises 54 residues: UPF0181 protein PM0480 (54 aa).

This sequence belongs to the UPF0181 family.

This is UPF0181 protein PM0480 from Pasteurella multocida (strain Pm70).